The chain runs to 201 residues: Peptidyl-tRNA hydrolase (201 aa).

Tyr15 is a binding site for tRNA. The Proton acceptor role is filled by His20. TRNA is bound by residues Tyr66, Asn68, and Asn114.

It belongs to the PTH family. Monomer.

The protein resides in the cytoplasm. The enzyme catalyses an N-acyl-L-alpha-aminoacyl-tRNA + H2O = an N-acyl-L-amino acid + a tRNA + H(+). In terms of biological role, hydrolyzes ribosome-free peptidyl-tRNAs (with 1 or more amino acids incorporated), which drop off the ribosome during protein synthesis, or as a result of ribosome stalling. Functionally, catalyzes the release of premature peptidyl moieties from peptidyl-tRNA molecules trapped in stalled 50S ribosomal subunits, and thus maintains levels of free tRNAs and 50S ribosomes. The protein is Peptidyl-tRNA hydrolase of Burkholderia pseudomallei (strain K96243).